Here is a 5161-residue protein sequence, read N- to C-terminus: Nonribosomal peptide synthetase TES (5161 aa).

Positions E37 to R436 are adenylation 1. Residues Q569–V645 form the Carrier 1 domain. O-(pantetheine 4'-phosphoryl)serine is present on S606. Residues G659–L1098 are condensation 1. Residues R1122–R1522 are adenylation 2. The segment at M1630 to L1742 is methyltransferase (M) domain 1. Residues T2068–V2141 form the Carrier 2 domain. Position 2102 is an O-(pantetheine 4'-phosphoryl)serine (S2102). The segment at E2179–L2593 is condensation 2. The adenylation 3 stretch occupies residues D2614 to R3010. The Carrier 3 domain occupies K3139–P3215. S3176 carries the post-translational modification O-(pantetheine 4'-phosphoryl)serine. The tract at residues L3232 to H3668 is condensation 3. The segment at F3694–R4098 is adenylation 4. The tract at residues E4203–F4329 is methyltransferase (M) domain 2. Residues R4643–K4725 form the Carrier 4 domain. S4680 carries the O-(pantetheine 4'-phosphoryl)serine modification. The interval F4785–F5093 is condensation 4.

It belongs to the NRP synthetase family.

The protein operates within phytotoxin biosynthesis. In terms of biological role, nonribosomal peptide synthetase; part of the gene cluster that mediates the biosynthesis of the phytotoxin tentoxin, an inhibitor the F1-ATPase activity of chloroplasts, resulting in chlorosis in sensitive plants. Tentoxin is a cyclic tetrapeptide that consists of four amino acid residues: glycine (Gly), alanine (Ala), leucine (Leu), and dehydrophenylalanine (DPhe). In addition, both the Ala and DPhe residues are N-methylated. The nonribosomal peptide synthetase TES assembles tentoxin from the four substrate amino acids. The adenylation domains of each of the 4 modules are responsible for the activation of Gly, Ala, Leu and DPhe, respectively. In addition, the N-methyltransferase domains in the second and fourth modules of TES could be responsible for N-methylation of Ala and DPhe residues. Finally, the condensation domain located in the termination module probably catalyzes the formation of the intramolecular macrocyclization and then the release of tentoxin. The cytochrome P450 monooxygenase TES1 is predicted to be involved in the formation of DPhe. In Alternaria alternata (Alternaria rot fungus), this protein is Nonribosomal peptide synthetase TES.